We begin with the raw amino-acid sequence, 173 residues long: Inorganic pyrophosphatase (173 aa).

Substrate is bound by residues lysine 28, arginine 42, and tyrosine 54. Mg(2+) contacts are provided by aspartate 64, aspartate 69, and aspartate 101. Tyrosine 140 serves as a coordination point for substrate.

It belongs to the PPase family. As to quaternary structure, homohexamer. Mg(2+) is required as a cofactor.

It localises to the cytoplasm. The catalysed reaction is diphosphate + H2O = 2 phosphate + H(+). Its function is as follows. Catalyzes the hydrolysis of inorganic pyrophosphate (PPi) forming two phosphate ions. The protein is Inorganic pyrophosphatase of Helicobacter pylori (strain ATCC 700392 / 26695) (Campylobacter pylori).